We begin with the raw amino-acid sequence, 523 residues long: Nuclear receptor ROR-alpha (523 aa).

Positions 1–26 (MESAPAAPDPAASEPGSSGSEAAAGS) are enriched in low complexity. The interval 1-63 (MESAPAAPDP…SRGISVTKKT (63 aa)) is disordered. Residue lysine 38 is modified to N6-methyllysine. 2 consecutive NR C4-type zinc fingers follow at residues 73–93 (CKIC…CEGC) and 109–133 (CPRQ…LQKC). A DNA-binding region (nuclear receptor) is located at residues 73–138 (CKICGDKSSG…RLQKCLAVGM (66 aa)). The tract at residues 154 to 183 (DSLYAEVQKHRMQQQQRDHQQQPGEAEPLT) is disordered. Threonine 183 carries the phosphothreonine; by MAPK1 modification. Lysine 240 is covalently cross-linked (Glycyl lysine isopeptide (Lys-Gly) (interchain with G-Cter in SUMO)). In terms of domain architecture, NR LBD spans 272–510 (ELEHLAQNIS…LHFPPLYKEL (239 aa)). Positions 506 to 511 (LYKELF) match the AF-2 motif.

Belongs to the nuclear hormone receptor family. NR1 subfamily. Monomer. Interacts (via the DNA-binding domain) with HIF1A; the interaction enhances HIF1A transcription under hypoxia through increasing protein stability. Interacts with CEBPB; the interaction disrupts the interaction CEBPB:EP300. Interacts with the coactivators NCOA2, PPARGC1A (via LXXLL motif), EP300 and MED1. Interacts with the corepressor NCOR1. Interacts with MAGED1 and CTNNB1. Interacts with CRY1 and PER2. Interacts (via AF-2 motif) with PROX1. Interacts with NRIP1. Isoform 4 interacts (via AF-2 motif) with isoform 1 of FOXP3 (via LXXLL motif). Phosphorylation by conventional PKCs in neurons inhibits transcriptional activity. Phosphorylated on Thr-183 by MAPK1/ERK1 in vitro. Post-translationally, sumoylated by SENP1 and SENP2. Sumoylation, promoted by PIAS2, PIAS3, PIAS4 but not PIAS1, enhances the transcriptional activity. Desumoylated by SENP1. In terms of processing, ubiquitinated, leading to its degradation by the proteasome. Proteasomal degradation is required for efficient transcriptional activity and is prevented by HR. Monomethylated at Lys-38 by EZH2, this creates a degron recognized by a DCX (DDB1-DCAF1/VPRBP-CUL4A-RBX1) E3 ubiquitin ligase complex. In terms of tissue distribution, expressed in cerebellum, heart, liver, lung, kidney, retina and brown and white adipose tissues. Expressed in the subset of mature Th17 cells.

It is found in the nucleus. Its function is as follows. Nuclear receptor that binds DNA as a monomer to ROR response elements (RORE) containing a single core motif half-site 5'-AGGTCA-3' preceded by a short A-T-rich sequence. Key regulator of embryonic development, cellular differentiation, immunity, circadian rhythm as well as lipid, steroid, xenobiotics and glucose metabolism. Considered to have intrinsic transcriptional activity, have some natural ligands like oxysterols that act as agonists (25-hydroxycholesterol) or inverse agonists (7-oxygenated sterols), enhancing or repressing the transcriptional activity, respectively. Recruits distinct combinations of cofactors to target genes regulatory regions to modulate their transcriptional expression, depending on the tissue, time and promoter contexts. Regulates genes involved in photoreceptor development including OPN1SW, OPN1SM and ARR3 and skeletal muscle development with MYOD1. Required for proper cerebellum development, regulates SHH gene expression, among others, to induce granule cells proliferation as well as expression of genes involved in calcium-mediated signal transduction. Regulates the circadian expression of several clock genes, including CLOCK, BMAL1, NPAS2 and CRY1. Competes with NR1D1 for binding to their shared DNA response element on some clock genes such as BMAL1, CRY1 and NR1D1 itself, resulting in NR1D1-mediated repression or RORA-mediated activation of clock genes expression, leading to the circadian pattern of clock genes expression. Therefore influences the period length and stability of the clock. Regulates genes involved in lipid metabolism such as apolipoproteins APOA1, APOA5, APOC3 and PPARG. In liver, has specific and redundant functions with RORC as positive or negative modulator of expression of genes encoding phase I and phase II proteins involved in the metabolism of lipids, steroids and xenobiotics, such as CYP7B1 and SULT2A1. Induces a rhythmic expression of some of these genes. In addition, interplays functionally with NR1H2 and NR1H3 for the regulation of genes involved in cholesterol metabolism. Also involved in the regulation of hepatic glucose metabolism through the modulation of G6PC1 and PCK1. In adipose tissue, plays a role as negative regulator of adipocyte differentiation, probably acting through dual mechanisms. May suppress CEBPB-dependent adipogenesis through direct interaction and PPARG-dependent adipogenesis through competition for DNA-binding. Downstream of IL6 and TGFB and synergistically with RORC isoform 2, is implicated in the lineage specification of uncommitted CD4(+) T-helper (T(H)) cells into T(H)17 cells, antagonizing the T(H)1 program. Probably regulates IL17 and IL17F expression on T(H) by binding to the essential enhancer conserved non-coding sequence 2 (CNS2) in the IL17-IL17F locus. Involved in hypoxia signaling by interacting with and activating the transcriptional activity of HIF1A. May inhibit cell growth in response to cellular stress. May exert an anti-inflammatory role by inducing CHUK expression and inhibiting NF-kappa-B signaling. The protein is Nuclear receptor ROR-alpha (Rora) of Mus musculus (Mouse).